Consider the following 664-residue polypeptide: NADH-ubiquinone oxidoreductase chain 5 (664 aa).

The next 17 helical transmembrane spans lie at 2–22 (LLLTLIFLPFLGSVAAGLFGF), 28–48 (GSVFITTLTTFLSCIFSLIII), 77–97 (FLFDSLTMIMLVVVTSISTLV), 120–140 (LFTFFMIILVTGDNFMQMFVG), 168–188 (AMLVNRISDLILLLGVLTIFY), 210–230 (FIFFNYILSIIDVACILIFIG), 250–270 (GPTPVSALIHAATMVTAGVYL), 285–305 (LKIITIIGASTAFFASTVGLV), 321–341 (LGYMFFACGLSNYPLAIFHLS), 342–362 (NHAYFKALLFLCSGAVIHAMG), 376–396 (ILPFTYIMFLIGSLSLMGFPF), 424–444 (LGTIGAFFTAFYSTRLLFFAF), 462–482 (PLEMGIPLGLLAFGSIFIGYI), 521–541 (LPVILSFCGLFGAFYLYFFKF), 590–610 (IDKGLIEMCGPYGLTTIFSFL), 614–634 (IILLQTGYIYHYSLLMLISTI), and 639–659 (IIFFSIIYYFNIITILLFLFI).

Belongs to the complex I subunit 5 family.

The protein localises to the mitochondrion inner membrane. It catalyses the reaction a ubiquinone + NADH + 5 H(+)(in) = a ubiquinol + NAD(+) + 4 H(+)(out). Functionally, core subunit of the mitochondrial membrane respiratory chain NADH dehydrogenase (Complex I) that is believed to belong to the minimal assembly required for catalysis. Complex I functions in the transfer of electrons from NADH to the respiratory chain. The immediate electron acceptor for the enzyme is believed to be ubiquinone. The protein is NADH-ubiquinone oxidoreductase chain 5 (ND5) of Phytophthora infestans (Potato late blight agent).